The sequence spans 307 residues: Fe-S cluster assembly protein dre2 (307 aa).

Disordered regions lie at residues 1–26 and 159–179; these read MTPVPVSVDTTADFAAPPTKTAPSTS and KKKKAPAPTEQPPVATGVGFV. Over residues 15–26 the composition is skewed to low complexity; the sequence is AAPPTKTAPSTS. Positions 23 to 152 are N-terminal SAM-like domain; the sequence is PSTSTRTLLL…EKPAYQEAAV (130 aa). A linker region spans residues 153–197; that stretch reads PLRLGGKKKKAPAPTEQPPVATGVGFVDGNDELIDEDDLLSDDDL. [2Fe-2S] cluster contacts are provided by cysteine 207, cysteine 219, cysteine 222, and cysteine 224. Residues 207–224 are fe-S binding site A; the sequence is CQPEKAKKRRRPCKDCTC. 4 residues coordinate [4Fe-4S] cluster: cysteine 270, cysteine 273, cysteine 281, and cysteine 284. 2 consecutive short sequence motifs (cx2C motif) follow at residues 270–273 and 281–284; these read CNSC and CSSC. A fe-S binding site B region spans residues 270–284; the sequence is CNSCSLGDAFRCSSC.

The protein belongs to the anamorsin family. As to quaternary structure, monomer. Interacts with tah18. Interacts with mia40. [2Fe-2S] cluster is required as a cofactor. It depends on [4Fe-4S] cluster as a cofactor.

The protein localises to the cytoplasm. It localises to the mitochondrion intermembrane space. Functionally, component of the cytosolic iron-sulfur (Fe-S) protein assembly (CIA) machinery required for the maturation of extramitochondrial Fe-S proteins. Part of an electron transfer chain functioning in an early step of cytosolic Fe-S biogenesis, facilitating the de novo assembly of a [4Fe-4S] cluster on the scaffold complex cfd1-nbp35. Electrons are transferred to dre2 from NADPH via the FAD- and FMN-containing protein tah18. Tah18-dre2 are also required for the assembly of the diferric tyrosyl radical cofactor of ribonucleotide reductase (RNR), probably by providing electrons for reduction during radical cofactor maturation in the catalytic small subunit rnr2. The chain is Fe-S cluster assembly protein dre2 from Aspergillus terreus (strain NIH 2624 / FGSC A1156).